The primary structure comprises 283 residues: Ribosomal RNA small subunit methyltransferase A (283 aa).

S-adenosyl-L-methionine-binding residues include Asn-13, Leu-15, Gly-39, Glu-59, Asp-87, and Asn-108.

This sequence belongs to the class I-like SAM-binding methyltransferase superfamily. rRNA adenine N(6)-methyltransferase family. RsmA subfamily.

It localises to the cytoplasm. The enzyme catalyses adenosine(1518)/adenosine(1519) in 16S rRNA + 4 S-adenosyl-L-methionine = N(6)-dimethyladenosine(1518)/N(6)-dimethyladenosine(1519) in 16S rRNA + 4 S-adenosyl-L-homocysteine + 4 H(+). Its function is as follows. Specifically dimethylates two adjacent adenosines (A1518 and A1519) in the loop of a conserved hairpin near the 3'-end of 16S rRNA in the 30S particle. May play a critical role in biogenesis of 30S subunits. The chain is Ribosomal RNA small subunit methyltransferase A from Helicobacter hepaticus (strain ATCC 51449 / 3B1).